The primary structure comprises 185 residues: ATP synthase subunit b, chloroplastic (185 aa).

The chain crosses the membrane as a helical span at residues 31 to 49 (LINSGVVLGLPVYSGKGVL).

The protein belongs to the ATPase B chain family. In terms of assembly, F-type ATPases have 2 components, F(1) - the catalytic core - and F(0) - the membrane proton channel. F(1) has five subunits: alpha(3), beta(3), gamma(1), delta(1), epsilon(1). F(0) has four main subunits: a(1), b(1), b'(1) and c(10-14). The alpha and beta chains form an alternating ring which encloses part of the gamma chain. F(1) is attached to F(0) by a central stalk formed by the gamma and epsilon chains, while a peripheral stalk is formed by the delta, b and b' chains.

The protein resides in the plastid. It is found in the chloroplast thylakoid membrane. In terms of biological role, f(1)F(0) ATP synthase produces ATP from ADP in the presence of a proton or sodium gradient. F-type ATPases consist of two structural domains, F(1) containing the extramembraneous catalytic core and F(0) containing the membrane proton channel, linked together by a central stalk and a peripheral stalk. During catalysis, ATP synthesis in the catalytic domain of F(1) is coupled via a rotary mechanism of the central stalk subunits to proton translocation. Component of the F(0) channel, it forms part of the peripheral stalk, linking F(1) to F(0). This is ATP synthase subunit b, chloroplastic from Huperzia lucidula (Shining clubmoss).